The following is a 39-amino-acid chain: Photosystem II reaction center protein L (39 aa).

Residues 18-38 (SLYLGLLVVFTTGILFSSYFF) form a helical membrane-spanning segment.

Belongs to the PsbL family. As to quaternary structure, PSII is composed of 1 copy each of membrane proteins PsbA, PsbB, PsbC, PsbD, PsbE, PsbF, PsbH, PsbI, PsbJ, PsbK, PsbL, PsbM, PsbT, PsbX, PsbY, PsbZ, Psb30/Ycf12, peripheral proteins PsbO, CyanoQ (PsbQ), PsbU, PsbV and a large number of cofactors. It forms dimeric complexes.

The protein localises to the cellular thylakoid membrane. One of the components of the core complex of photosystem II (PSII). PSII is a light-driven water:plastoquinone oxidoreductase that uses light energy to abstract electrons from H(2)O, generating O(2) and a proton gradient subsequently used for ATP formation. It consists of a core antenna complex that captures photons, and an electron transfer chain that converts photonic excitation into a charge separation. This subunit is found at the monomer-monomer interface and is required for correct PSII assembly and/or dimerization. The polypeptide is Photosystem II reaction center protein L (Synechococcus sp. (strain WH7803)).